A 152-amino-acid chain; its full sequence is Large ribosomal subunit protein bL9 (152 aa).

Belongs to the bacterial ribosomal protein bL9 family.

Its function is as follows. Binds to the 23S rRNA. The protein is Large ribosomal subunit protein bL9 of Nocardia farcinica (strain IFM 10152).